A 143-amino-acid chain; its full sequence is Mediator of RNA polymerase II transcription subunit 10 (143 aa).

Positions 123-143 are disordered; the sequence is GAHSNTEISTNPGQKRQGNVS. Residues 124 to 143 show a composition bias toward polar residues; that stretch reads AHSNTEISTNPGQKRQGNVS.

Belongs to the Mediator complex subunit 10 family. As to quaternary structure, component of the Mediator complex.

Its subcellular location is the nucleus. Its function is as follows. Component of the Mediator complex, a coactivator involved in the regulated transcription of nearly all RNA polymerase II-dependent genes. Mediator functions as a bridge to convey information from gene-specific regulatory proteins to the basal RNA polymerase II transcription machinery. Mediator is recruited to promoters by direct interactions with regulatory proteins and serves as a scaffold for the assembly of a functional preinitiation complex with RNA polymerase II and the general transcription factors. In Yarrowia lipolytica (strain CLIB 122 / E 150) (Yeast), this protein is Mediator of RNA polymerase II transcription subunit 10 (NUT2).